The primary structure comprises 1229 residues: ABC transporter B family member 3 (1229 aa).

Residues 22–42 traverse the membrane as a helical segment; the sequence is VLLMIVGSIGAIGNGVGFPLM. An ABC transmembrane type-1 1 domain is found at 25 to 313; sequence MIVGSIGAIG…TTPCLTAFAA (289 aa). N-linked (GlcNAc...) asparagine glycosylation is present at Asn56. 5 helical membrane-spanning segments follow: residues 73–93, 149–169, 172–192, 252–272, and 281–301; these read FVYLGLGTLGAAFLQVACWMI, FIQLIATFVGGFVLAFVKGWL, LVMLVSIPLLAIAGAAMPIIV, GLGLGVVFFVFFCSYALAIWF, and GYTGGEVVNVMVTVVASSMSL. The region spanning 348 to 584 is the ABC transporter 1 domain; it reads IELRDVCFSY…HEGAYAQLIR (237 aa). ATP is bound at residue 383–390; the sequence is GESGSGKS. A glycan (N-linked (GlcNAc...) asparagine) is linked at Asn450. Basic and acidic residues predominate over residues 594-606; the sequence is RLESSNELRDRSI. The segment at 594–614 is disordered; it reads RLESSNELRDRSINRGSSRNI. An N-linked (GlcNAc...) asparagine glycan is attached at Asn645. The next 2 helical transmembrane spans lie at 661–681 and 706–726; these read ILILGTLLGAVNGTIFPIFGI and MIFVLLGVASLIVYPMHTYLF. In terms of domain architecture, ABC transmembrane type-1 2 spans 662 to 949; that stretch reads LILGTLLGAV…ASSFAPDSSK (288 aa). Asn758 is a glycosylation site (N-linked (GlcNAc...) asparagine). The next 3 helical transmembrane spans lie at 797 to 817, 888 to 908, and 923 to 943; these read IIAFTASWKLAVIILVMIPLI, GVGFGISFFVLYSVYASCFYV, and VFQVFLALTMTAIGISQASSF. The ABC transporter 2 domain occupies 984–1222; that stretch reads IELCHISFTY…EGGVYASLVQ (239 aa). 1019–1026 provides a ligand contact to ATP; that stretch reads GESGSGKS. Asn1073 and Asn1173 each carry an N-linked (GlcNAc...) asparagine glycan.

Belongs to the ABC transporter superfamily. ABCB family. Multidrug resistance exporter (TC 3.A.1.201) subfamily.

The protein resides in the membrane. This Arabidopsis thaliana (Mouse-ear cress) protein is ABC transporter B family member 3 (ABCB3).